Reading from the N-terminus, the 648-residue chain is Leucine aminopeptidase 2 (648 aa).

A peptide contacts are provided by residues 143-145 (QCQ) and 269-274 (PYGGME). His298 is a Zn(2+) binding site. Glu299 acts as the Proton acceptor in catalysis. Residues His302 and Glu321 each contribute to the Zn(2+) site. The active-site Proton donor is the Tyr408.

The protein belongs to the peptidase M1 family. Zn(2+) is required as a cofactor.

It is found in the cytoplasm. Its subcellular location is the nucleus. It catalyses the reaction an epoxide + H2O = an ethanediol. Its function is as follows. Aminopeptidase that preferentially cleaves di- and tripeptides. Also has low epoxide hydrolase activity (in vitro). Can hydrolyze the epoxide leukotriene LTA(4) but it forms preferentially 5,6-dihydroxy-7,9,11,14-eicosatetraenoic acid rather than the cytokine leukotriene B(4) as the product compared to the homologous mammalian enzyme (in vitro). The chain is Leucine aminopeptidase 2 from Lodderomyces elongisporus (strain ATCC 11503 / CBS 2605 / JCM 1781 / NBRC 1676 / NRRL YB-4239) (Yeast).